The chain runs to 89 residues: Small ribosomal subunit protein uS15 (89 aa).

It belongs to the universal ribosomal protein uS15 family. In terms of assembly, part of the 30S ribosomal subunit. Forms a bridge to the 50S subunit in the 70S ribosome, contacting the 23S rRNA.

In terms of biological role, one of the primary rRNA binding proteins, it binds directly to 16S rRNA where it helps nucleate assembly of the platform of the 30S subunit by binding and bridging several RNA helices of the 16S rRNA. Its function is as follows. Forms an intersubunit bridge (bridge B4) with the 23S rRNA of the 50S subunit in the ribosome. The polypeptide is Small ribosomal subunit protein uS15 (Trichodesmium erythraeum (strain IMS101)).